Here is a 488-residue protein sequence, read N- to C-terminus: Ribulose bisphosphate carboxylase large chain (488 aa).

Positions 127 and 177 each coordinate substrate. The Proton acceptor role is filled by Lys179. Lys181 contacts substrate. Mg(2+) contacts are provided by Lys205, Asp207, and Glu208. N6-carboxylysine is present on Lys205. The active-site Proton acceptor is His297. Positions 298, 330, and 382 each coordinate substrate.

Belongs to the RuBisCO large chain family. Type I subfamily. In terms of assembly, heterohexadecamer of 8 large chains and 8 small chains. Mg(2+) is required as a cofactor.

It localises to the plastid. The protein localises to the chloroplast. The enzyme catalyses 2 (2R)-3-phosphoglycerate + 2 H(+) = D-ribulose 1,5-bisphosphate + CO2 + H2O. It carries out the reaction D-ribulose 1,5-bisphosphate + O2 = 2-phosphoglycolate + (2R)-3-phosphoglycerate + 2 H(+). Its function is as follows. RuBisCO catalyzes two reactions: the carboxylation of D-ribulose 1,5-bisphosphate, the primary event in carbon dioxide fixation, as well as the oxidative fragmentation of the pentose substrate in the photorespiration process. Both reactions occur simultaneously and in competition at the same active site. The chain is Ribulose bisphosphate carboxylase large chain from Guillardia theta (Cryptophyte).